We begin with the raw amino-acid sequence, 60 residues long: Putative SERF-like protein (60 aa).

Residues 1–53 (MTRGNQRDLARQKNQKKQADLTKGKRTDNLTVEQRKARDAELMREKQKKKEEA) show a composition bias toward basic and acidic residues. The tract at residues 1–60 (MTRGNQRDLARQKNQKKQADLTKGKRTDNLTVEQRKARDAELMREKQKKKEEAAAAGTSK) is disordered.

Belongs to the SERF family.

This Drosophila melanogaster (Fruit fly) protein is Putative SERF-like protein.